The sequence spans 851 residues: Periplasmic nitrate reductase (851 aa).

A signal peptide (tat-type signal) is located at residues 1–29 (MQSNRRDFLKAQALAASAAAAGIPIVVEA). Residues 44 to 100 (VRWDKAPCRFCGTGCAVMVGVQEGKVVATQGDPEAPVNRGLNCIKGYFLSKIMYGRD) enclose the 4Fe-4S Mo/W bis-MGD-type domain. [4Fe-4S] cluster contacts are provided by cysteine 51, cysteine 54, cysteine 58, and cysteine 86. Residues lysine 88, glutamine 155, asparagine 180, cysteine 184, 217–224 (WGSNMAEM), 248–252 (STYEH), and 267–269 (QTD) each bind Mo-bis(molybdopterin guanine dinucleotide). Residues 317–338 (DATSNGYPGADGKPKGNPNDST) form a disordered region. Residues methionine 388, glutamine 392, asparagine 498, 524 to 525 (SD), lysine 547, aspartate 574, and 741 to 750 (TGRVLEHWHT) each bind Mo-bis(molybdopterin guanine dinucleotide). Phenylalanine 817 is a binding site for substrate. Mo-bis(molybdopterin guanine dinucleotide) contacts are provided by asparagine 825 and lysine 842.

The protein belongs to the prokaryotic molybdopterin-containing oxidoreductase family. NasA/NapA/NarB subfamily. As to quaternary structure, component of the periplasmic nitrate reductase NapAB complex composed of NapA and NapB. [4Fe-4S] cluster is required as a cofactor. It depends on Mo-bis(molybdopterin guanine dinucleotide) as a cofactor. Post-translationally, predicted to be exported by the Tat system. The position of the signal peptide cleavage has not been experimentally proven.

It is found in the periplasm. It carries out the reaction 2 Fe(II)-[cytochrome] + nitrate + 2 H(+) = 2 Fe(III)-[cytochrome] + nitrite + H2O. Catalytic subunit of the periplasmic nitrate reductase complex NapAB. Receives electrons from NapB and catalyzes the reduction of nitrate to nitrite. The polypeptide is Periplasmic nitrate reductase (Leptothrix cholodnii (strain ATCC 51168 / LMG 8142 / SP-6) (Leptothrix discophora (strain SP-6))).